The following is a 270-amino-acid chain: Acyl-[acyl-carrier-protein]--UDP-N-acetylglucosamine O-acyltransferase (270 aa).

This sequence belongs to the transferase hexapeptide repeat family. LpxA subfamily. As to quaternary structure, homotrimer.

The protein localises to the cytoplasm. It catalyses the reaction a (3R)-hydroxyacyl-[ACP] + UDP-N-acetyl-alpha-D-glucosamine = a UDP-3-O-[(3R)-3-hydroxyacyl]-N-acetyl-alpha-D-glucosamine + holo-[ACP]. It functions in the pathway glycolipid biosynthesis; lipid IV(A) biosynthesis; lipid IV(A) from (3R)-3-hydroxytetradecanoyl-[acyl-carrier-protein] and UDP-N-acetyl-alpha-D-glucosamine: step 1/6. Functionally, involved in the biosynthesis of lipid A, a phosphorylated glycolipid that anchors the lipopolysaccharide to the outer membrane of the cell. This is Acyl-[acyl-carrier-protein]--UDP-N-acetylglucosamine O-acyltransferase from Helicobacter pylori (strain J99 / ATCC 700824) (Campylobacter pylori J99).